A 222-amino-acid polypeptide reads, in one-letter code: MDRTICPFFIQSFTMSTALKRLIPFLVPFVVFLVAAALGGLAADQPENHQALAEPVTGVGEAGVSPVNEAGESYSSATSGVQEATAPGAVLLDAIDAESDKVDNQAEGGERMKKVEEELSLLRRELYDRTDRPGLKRAVILSLATSAAIGGRMVSRTLRDNIPGYFVVINAILAAYYIRKVLTYRRRVMTKRQPFMSSVKNFFRRKPKDEGAGVDKASKKQT.

2 helical membrane-spanning segments follow: residues 22 to 42 and 162 to 182; these read LIPF…GGLA and IPGY…RKVL. The Prevents secretion from ER signature appears at 219–222; the sequence is KKQT.

In terms of assembly, homodimer. Interacts (via N-terminus) with human host CAMLG (via N-terminus).

It is found in the cytoplasm. The protein localises to the host endoplasmic reticulum. It localises to the parasitophorous vacuole membrane. Its function is as follows. Direct host-parasite interaction occurs at the cytoplasmic faces of the parasitophorous vacuole membrane (PVM) and the host endoplasmic reticulum (ER) membrane via GRA3 and host CAMLG association. Direct insertion of GRA3 ER retrieval motif into the host ER membrane contributes to the host ER recruitment to the PVM. In Toxoplasma gondii, this protein is Dense granule protein 3.